The chain runs to 332 residues: Acryloyl-coenzyme A reductase (332 aa).

Cys38 contacts Zn(2+). NADP(+) is bound at residue Tyr39. The Zn(2+) site is built by His60, Asp90, Cys93, Cys96, Cys104, and Cys146. Residues 172–175 (SGGV) and 194–196 (TTS) each bind NADP(+).

Belongs to the zinc-containing alcohol dehydrogenase family. In terms of assembly, monomer. Zn(2+) serves as cofactor.

It carries out the reaction propanoyl-CoA + NADP(+) = acryloyl-CoA + NADPH + H(+). In terms of biological role, plays a role in autotrophic carbon fixation via the 3-hydroxypropionate/4-hydroxybutyrate cycle. Catalyzes the acryloyl-CoA dependent NADPH oxidation and formation of propionyl-CoA. The protein is Acryloyl-coenzyme A reductase of Metallosphaera sedula (strain ATCC 51363 / DSM 5348 / JCM 9185 / NBRC 15509 / TH2).